Consider the following 257-residue polypeptide: Gene 3 protein (257 aa).

The span at 163 to 176 (STENLLGQTQSSTH) shows a compositional bias: polar residues. A disordered region spans residues 163–257 (STENLLGQTQ…SDSSVSSVFF (95 aa)). The segment covering 214-240 (SIREETVSGMARAREECNSPSEHDRLT) has biased composition (basic and acidic residues).

The polypeptide is Gene 3 protein (Equine herpesvirus 1 (strain Ab4p) (EHV-1)).